The sequence spans 447 residues: Tubulin beta chain (447 aa).

Residues Gln-11, Glu-69, Ser-138, Gly-142, Thr-143, Gly-144, Asn-204, and Asn-226 each contribute to the GTP site. Mg(2+) is bound at residue Glu-69. The segment at 424 to 447 (QYQEASVSDAEEEYDEEAPLEGEE) is disordered. Residues 432–447 (DAEEEYDEEAPLEGEE) are compositionally biased toward acidic residues.

The protein belongs to the tubulin family. In terms of assembly, dimer of alpha and beta chains. A typical microtubule is a hollow water-filled tube with an outer diameter of 25 nm and an inner diameter of 15 nM. Alpha-beta heterodimers associate head-to-tail to form protofilaments running lengthwise along the microtubule wall with the beta-tubulin subunit facing the microtubule plus end conferring a structural polarity. Microtubules usually have 13 protofilaments but different protofilament numbers can be found in some organisms and specialized cells. Mg(2+) is required as a cofactor.

The protein localises to the cytoplasm. It localises to the cytoskeleton. Its function is as follows. Tubulin is the major constituent of microtubules, a cylinder consisting of laterally associated linear protofilaments composed of alpha- and beta-tubulin heterodimers. Microtubules grow by the addition of GTP-tubulin dimers to the microtubule end, where a stabilizing cap forms. Below the cap, tubulin dimers are in GDP-bound state, owing to GTPase activity of alpha-tubulin. The protein is Tubulin beta chain (TUB1) of Zymoseptoria tritici (Speckled leaf blotch fungus).